The primary structure comprises 282 residues: Phycocyanobilin lyase subunit beta (282 aa).

It belongs to the CpcE/RpcE/PecE family. CpcE and CpcF associate to form a lyase.

Its function is as follows. Required for the chromophorylation of the CpcA gene product. The polypeptide is Phycocyanobilin lyase subunit beta (cpcF1) (Pseudanabaena tenuis (strain PCC 7409)).